We begin with the raw amino-acid sequence, 1865 residues long: Transient receptor potential cation channel subfamily M member 7 (1865 aa).

Met1 is subject to N-acetylmethionine. The Cytoplasmic portion of the chain corresponds to 1-850 (MSQKSWIEST…ITRKFYAFYH (850 aa)). Ser101 is subject to Phosphoserine. Low complexity predominate over residues 544 to 555 (NRRSGRNTSSST). Residues 544 to 575 (NRRSGRNTSSSTPQLRKSHESFGNRADKKEKM) form a disordered region. The span at 560–573 (KSHESFGNRADKKE) shows a compositional bias: basic and acidic residues. A helical membrane pass occupies residues 851–876 (APIVKFWFNTLAYLGFLMLYTFVVLV). The Extracellular segment spans residues 877–882 (QMEQLP). The chain crosses the membrane as a helical span at residues 883–904 (SVQEWIVIAYIFTYAIEKVREI). Residues 905 to 923 (FMSEAGKVNQKIKVWFSDY) lie on the Cytoplasmic side of the membrane. A helical transmembrane segment spans residues 924–943 (FNISDTIAIISFFIGFGLRF). Residues 944–956 (GAKWNFANAYDNH) are Extracellular-facing. The chain crosses the membrane as a helical span at residues 957 to 980 (VFVAGRLIYCLNIIFWYVRLLDFL). The Cytoplasmic portion of the chain corresponds to 981–999 (AVNQQAGPYVMMIGKMVAN). A helical membrane pass occupies residues 1000–1023 (MFYIVVIMALVLLSFGVPRKAILY). Topologically, residues 1024–1025 (PH) are extracellular. An intramembrane region (pore-forming) is located at residues 1026–1066 (EAPSWTLAKDIVFHPYWMIFGEVYAYEIDVCANDSVIPQIC). Residues 1067-1069 (GPG) are Extracellular-facing. The chain crosses the membrane as a helical span at residues 1070 to 1098 (TWLTPFLQAVYLFVQYIIMVNLLIAFFNN). Over 1099–1865 (VYLQVKAISN…ESTNSVRLML (767 aa)) the chain is Cytoplasmic. 3 S-palmitoyl cysteine lipidation sites follow: Cys1143, Cys1144, and Cys1146. Residue Thr1163 is modified to Phosphothreonine; by autocatalysis. A phosphoserine; by autocatalysis mark is found at Ser1191 and Ser1193. Residues 1198 to 1250 (RVTFERVEQMCIQIKEVGDRVNYIKRSLQSLDSQIGHLQDLSALTVDTLKTLT) are a coiled coil. Residue Ser1224 is modified to Phosphoserine. Phosphoserine; by autocatalysis is present on residues Ser1255 and Ser1258. Phosphothreonine; by autocatalysis is present on Thr1265. Ser1287 carries the phosphoserine; by autocatalysis modification. At Ser1301 the chain carries Phosphoserine. Phosphoserine; by autocatalysis is present on Ser1358. 2 positions are modified to phosphoserine: Ser1361 and Ser1386. Over residues 1386–1398 (SSSTSIPHLSSPP) the composition is skewed to low complexity. A disordered region spans residues 1386–1407 (SSSTSIPHLSSPPTKFFVSTPS). A phosphoserine; by autocatalysis mark is found at Ser1387 and Ser1390. Ser1395 and Ser1396 each carry phosphoserine. Ser1404 bears the Phosphoserine; by autocatalysis mark. Thr1405 carries the phosphothreonine; by autocatalysis modification. Ser1407 carries the post-translational modification Phosphoserine; by autocatalysis. Thr1435 bears the Phosphothreonine; by autocatalysis mark. A Phosphoserine; by autocatalysis modification is found at Ser1446. A Phosphothreonine; by autocatalysis modification is found at Thr1455. Phosphoserine; by autocatalysis is present on residues Ser1456 and Ser1463. Residue Thr1467 is modified to Phosphothreonine. Ser1468 is subject to Phosphoserine; by autocatalysis. Thr1471 is subject to Phosphothreonine; by autocatalysis. 2 positions are modified to phosphoserine; by autocatalysis: Ser1476 and Ser1477. Thr1482 carries the phosphothreonine; by autocatalysis modification. The segment at 1492 to 1511 (HSKQAEKISRRPSTEDTHEV) is disordered. Ser1493 carries the post-translational modification Phosphoserine; by autocatalysis. Positions 1494–1511 (KQAEKISRRPSTEDTHEV) are enriched in basic and acidic residues. At Ser1500 the chain carries Phosphoserine. Phosphoserine; by autocatalysis is present on Ser1504. A Phosphothreonine; by autocatalysis modification is found at Thr1508. Phosphoserine; by autocatalysis is present on residues Ser1513, Ser1527, and Ser1533. Residues 1524 to 1543 (DRPSNREMPSEEGTLNGLTS) are disordered. A phosphothreonine; by autocatalysis mark is found at Thr1537 and Thr1542. Ser1543 bears the Phosphoserine; by autocatalysis mark. Thr1551 carries the post-translational modification Phosphothreonine; by autocatalysis. Residues Ser1567 and Ser1569 each carry the phosphoserine; by autocatalysis modification. Thr1583 bears the Phosphothreonine; by autocatalysis mark. Residues 1594 to 1824 (ILNNSMSSWS…CCRKLKLPDL (231 aa)) enclose the Alpha-type protein kinase domain. A phosphoserine; by autocatalysis mark is found at Ser1598 and Ser1615. ADP contacts are provided by Gly1621, Gly1622, Leu1623, Arg1624, and Lys1648. Ser1660 is modified (phosphoserine; by autocatalysis). Thr1685 is modified (phosphothreonine; by autocatalysis). Glu1720, Glu1721, and Met1723 together coordinate ADP. Zn(2+) is bound at residue His1753. Asp1767 (proton acceptor) is an active-site residue. Asp1777 provides a ligand contact to ADP. Position 1779 is a phosphoserine; by autocatalysis (Ser1779). The Zn(2+) site is built by His1810, Cys1812, and Cys1816. The residue at position 1830 (Thr1830) is a Phosphothreonine; by autocatalysis. Residues 1836–1865 (FPQDEPSDLNLQPGNSTKESESTNSVRLML) form a disordered region. Positions 1844–1865 (LNLQPGNSTKESESTNSVRLML) are enriched in polar residues. Ser1851 bears the Phosphoserine mark. At Ser1860 the chain carries Phosphoserine; by autocatalysis.

In the C-terminal section; belongs to the protein kinase superfamily. Alpha-type protein kinase family. ALPK subfamily. The protein in the N-terminal section; belongs to the transient receptor (TC 1.A.4) family. LTrpC subfamily. TRPM7 sub-subfamily. Homotetramer. Interacts with PLCB1. Forms heteromers with TRPM6; heteromeric channels are functionally different from the homomeric channels. Requires Zn(2+) as cofactor. Post-translationally, palmitoylated; palmitoylation at Cys-1143, Cys-1144 and Cys-1146 promotes TRPM7 trafficking from the Golgi to the surface membrane. Autophosphorylated; autophosphorylation of C-terminus regulates TRPM7 kinase activity towards its substrates. In terms of processing, the C-terminal kinase domain can be cleaved from the channel segment in a cell-type-specific fashion. TRPM7 is cleaved by caspase-8, dissociating the kinase from the ion-conducting pore. The cleaved kinase fragments (M7CKs) can translocate to the cell nucleus and binds chromatin-remodeling complex proteins in a Zn(2+)-dependent manner to ultimately phosphorylate specific Ser/Thr residues of histones.

The protein localises to the cell membrane. Its subcellular location is the cytoplasmic vesicle membrane. The protein resides in the nucleus. It catalyses the reaction L-seryl-[protein] + ATP = O-phospho-L-seryl-[protein] + ADP + H(+). The catalysed reaction is L-threonyl-[protein] + ATP = O-phospho-L-threonyl-[protein] + ADP + H(+). The enzyme catalyses Mg(2+)(in) = Mg(2+)(out). It carries out the reaction Ca(2+)(in) = Ca(2+)(out). It catalyses the reaction Zn(2+)(in) = Zn(2+)(out). With respect to regulation, channel displays constitutive activity. Channel activity is negatively regulated by cytosolic Mg(2+) and Mg-ATP. Channel activity is negatively regulated by low intracellular pH. Resting free cytosolic Mg(2+) and Mg-ATP concentrations seem to be sufficient to block native TRPM7 channel activity. TRPM7 channel activity is highly dependent on membrane levels of phosphatidylinositol 4,5 bisphosphate (PIP2). PIP2 hydrolysis negatively regulates TRPM7 channel activity. TRPM7 kinase activity does not affect channel activity. The kinase activity is controlled through the autophosphorylation of a serine/threonine-rich region located N-terminal to the catalytic domain. Functionally, bifunctional protein that combines an ion channel with an intrinsic kinase domain, enabling it to modulate cellular functions either by conducting ions through the pore or by phosphorylating downstream proteins via its kinase domain. The channel is highly permeable to divalent cations, specifically calcium (Ca2+), magnesium (Mg2+) and zinc (Zn2+) and mediates their influx. Controls a wide range of biological processes such as Ca2(+), Mg(2+) and Zn(2+) homeostasis, vesicular Zn(2+) release channel and intracellular Ca(2+) signaling, embryonic development, immune responses, cell motility, proliferation and differentiation. The C-terminal alpha-kinase domain autophosphorylates cytoplasmic residues of TRPM7. In vivo, TRPM7 phosphorylates SMAD2, suggesting that TRPM7 kinase may play a role in activating SMAD signaling pathways. In vitro, TRPM7 kinase phosphorylates ANXA1 (annexin A1), myosin II isoforms and a variety of proteins with diverse cellular functions. In terms of biological role, the cleaved channel exhibits substantially higher current and potentiates Fas receptor signaling. Its function is as follows. The C-terminal kinase domain can be cleaved from the channel segment in a cell-type-specific fashion. In immune cells, the TRPM7 kinase domain is clipped from the channel domain by caspases in response to Fas-receptor stimulation. The cleaved kinase fragments can translocate to the nucleus, and bind chromatin-remodeling complex proteins in a Zn(2+)-dependent manner to ultimately phosphorylate specific Ser/Thr residues of histones known to be functionally important for cell differentiation and embryonic development. The protein is Transient receptor potential cation channel subfamily M member 7 (TRPM7) of Homo sapiens (Human).